A 385-amino-acid polypeptide reads, in one-letter code: 8-amino-7-oxononanoate synthase (385 aa).

A substrate-binding site is contributed by Arg21. 108–109 (GF) serves as a coordination point for pyridoxal 5'-phosphate. His133 is a substrate binding site. Residues Ser179, His207, and Thr233 each coordinate pyridoxal 5'-phosphate. At Lys236 the chain carries N6-(pyridoxal phosphate)lysine. Substrate is bound at residue Thr352.

This sequence belongs to the class-II pyridoxal-phosphate-dependent aminotransferase family. BioF subfamily. Homodimer. The cofactor is pyridoxal 5'-phosphate.

The enzyme catalyses 6-carboxyhexanoyl-[ACP] + L-alanine + H(+) = (8S)-8-amino-7-oxononanoate + holo-[ACP] + CO2. Its pathway is cofactor biosynthesis; biotin biosynthesis. Its function is as follows. Catalyzes the decarboxylative condensation of pimeloyl-[acyl-carrier protein] and L-alanine to produce 8-amino-7-oxononanoate (AON), [acyl-carrier protein], and carbon dioxide. The sequence is that of 8-amino-7-oxononanoate synthase from Pseudescherichia vulneris (Escherichia vulneris).